The primary structure comprises 568 residues: Oxygen-dependent choline dehydrogenase (568 aa).

An FAD-binding site is contributed by 8–37; the sequence is DYIIIGAGSAGNTLAARLTEDAGVTVLLLE. His477 functions as the Proton acceptor in the catalytic mechanism.

Belongs to the GMC oxidoreductase family. It depends on FAD as a cofactor.

The catalysed reaction is choline + A = betaine aldehyde + AH2. It catalyses the reaction betaine aldehyde + NAD(+) + H2O = glycine betaine + NADH + 2 H(+). It participates in amine and polyamine biosynthesis; betaine biosynthesis via choline pathway; betaine aldehyde from choline (cytochrome c reductase route): step 1/1. Functionally, involved in the biosynthesis of the osmoprotectant glycine betaine. Catalyzes the oxidation of choline to betaine aldehyde and betaine aldehyde to glycine betaine at the same rate. The protein is Oxygen-dependent choline dehydrogenase of Pseudomonas syringae pv. tomato (strain ATCC BAA-871 / DC3000).